We begin with the raw amino-acid sequence, 1012 residues long: Ubiquitin-like modifier-activating enzyme 7 (1012 aa).

A 1-1 repeat occupies 23–159; that stretch reads GSPAMQRIQG…DTRGLVGQLF (137 aa). A 2 approximate repeats region spans residues 23 to 575; that stretch reads GSPAMQRIQG…GTWGSATVFM (553 aa). Residue serine 266 is modified to Phosphoserine. A 1-2 repeat occupies 423-575; the sequence is GAGFQEKLRR…GTWGSATVFM (153 aa). 442–471 provides a ligand contact to ATP; sequence AIGCELLKVFALVGLGAGNSGGLTVVDMDH. Catalysis depends on cysteine 599, which acts as the Glycyl thioester intermediate.

It belongs to the ubiquitin-activating E1 family. As to quaternary structure, (Microbial infection) Interacts with human cytomegalovirus proteins NEC2/UL50 and UL26; these interactions inhibit ISGylation and cause proteasomal degradation of UBA7. (Microbial infection) Interacts with rotavirus non-structural protein 5 (NSP5); this interaction promotes UBA7 proteasomal degradation. In terms of assembly, monomer. Binds and is involved in the conjugation of G1P2/ISG15. ISGylated. In terms of processing, ubiquitinated by RNF170. Expressed in a variety of normal and tumor cell types, but is reduced in lung cancer cell lines.

The protein resides in the cytoplasm. Its subcellular location is the nucleus. It functions in the pathway protein modification; protein ubiquitination. Functionally, E1-activating enzyme that catalyzes the covalent conjugation of the ubiquitin-like protein product of ISG15 to additional interferon stimulated proteins (ISGs) as well as other cellular proteins such as P53 in a process termed protein ISGylation. Plays an essential role in antiviral immunity together with ISG15 by restricting the replication of many viruses including rabies virus, influenza virus, sindbis virus, rotavirus or human cytomegalovirus. For example, ISG15 modification of influenza A protein NS1 disrupts the association of the NS1 with importin-alpha leading to NS1 nuclear import inhibition. ISGylation of human cytomegalovirs protein UL26 regulates its stability and inhibits its activities to suppress NF-kappa-B signaling. The polypeptide is Ubiquitin-like modifier-activating enzyme 7 (Homo sapiens (Human)).